Reading from the N-terminus, the 82-residue chain is RNA-binding protein Hfq (82 aa).

The region spanning 11–71 (DTFLNHVRKT…ISTIMPGAPI (61 aa)) is the Sm domain.

This sequence belongs to the Hfq family. In terms of assembly, homohexamer.

Functionally, RNA chaperone that binds small regulatory RNA (sRNAs) and mRNAs to facilitate mRNA translational regulation in response to envelope stress, environmental stress and changes in metabolite concentrations. Also binds with high specificity to tRNAs. The sequence is that of RNA-binding protein Hfq from Bradyrhizobium sp. (strain BTAi1 / ATCC BAA-1182).